A 279-amino-acid polypeptide reads, in one-letter code: Elongation factor Ts (279 aa).

An involved in Mg(2+) ion dislocation from EF-Tu region spans residues 79–82; sequence TDFV.

Belongs to the EF-Ts family.

The protein resides in the cytoplasm. Its function is as follows. Associates with the EF-Tu.GDP complex and induces the exchange of GDP to GTP. It remains bound to the aminoacyl-tRNA.EF-Tu.GTP complex up to the GTP hydrolysis stage on the ribosome. The sequence is that of Elongation factor Ts from Phytoplasma mali (strain AT).